Consider the following 202-residue polypeptide: FMN-dependent NADH:quinone oxidoreductase (202 aa).

FMN is bound by residues S10 and 95 to 98 (MYNF).

It belongs to the azoreductase type 1 family. Homodimer. The cofactor is FMN.

The catalysed reaction is 2 a quinone + NADH + H(+) = 2 a 1,4-benzosemiquinone + NAD(+). It catalyses the reaction N,N-dimethyl-1,4-phenylenediamine + anthranilate + 2 NAD(+) = 2-(4-dimethylaminophenyl)diazenylbenzoate + 2 NADH + 2 H(+). Quinone reductase that provides resistance to thiol-specific stress caused by electrophilic quinones. Its function is as follows. Also exhibits azoreductase activity. Catalyzes the reductive cleavage of the azo bond in aromatic azo compounds to the corresponding amines. This Alkalilimnicola ehrlichii (strain ATCC BAA-1101 / DSM 17681 / MLHE-1) protein is FMN-dependent NADH:quinone oxidoreductase.